The sequence spans 240 residues: Phosphatidylserine decarboxylase proenzyme (240 aa).

Serine 205 functions as the Schiff-base intermediate with substrate; via pyruvic acid in the catalytic mechanism. A Pyruvic acid (Ser); by autocatalysis modification is found at serine 205.

This sequence belongs to the phosphatidylserine decarboxylase family. PSD-A subfamily. Heterodimer of a large membrane-associated beta subunit and a small pyruvoyl-containing alpha subunit. Requires pyruvate as cofactor. Is synthesized initially as an inactive proenzyme. Formation of the active enzyme involves a self-maturation process in which the active site pyruvoyl group is generated from an internal serine residue via an autocatalytic post-translational modification. Two non-identical subunits are generated from the proenzyme in this reaction, and the pyruvate is formed at the N-terminus of the alpha chain, which is derived from the carboxyl end of the proenzyme. The post-translation cleavage follows an unusual pathway, termed non-hydrolytic serinolysis, in which the side chain hydroxyl group of the serine supplies its oxygen atom to form the C-terminus of the beta chain, while the remainder of the serine residue undergoes an oxidative deamination to produce ammonia and the pyruvoyl prosthetic group on the alpha chain.

The protein resides in the cell membrane. It catalyses the reaction a 1,2-diacyl-sn-glycero-3-phospho-L-serine + H(+) = a 1,2-diacyl-sn-glycero-3-phosphoethanolamine + CO2. It participates in phospholipid metabolism; phosphatidylethanolamine biosynthesis; phosphatidylethanolamine from CDP-diacylglycerol: step 2/2. Catalyzes the formation of phosphatidylethanolamine (PtdEtn) from phosphatidylserine (PtdSer). The chain is Phosphatidylserine decarboxylase proenzyme from Rhodopirellula baltica (strain DSM 10527 / NCIMB 13988 / SH1).